We begin with the raw amino-acid sequence, 63 residues long: Cecropin-2 (63 aa).

The signal sequence occupies residues 1–23 (MNFYKVFIFVALILAISLGQSEA). An Arginine amide modification is found at Arg62.

Belongs to the cecropin family.

The protein localises to the secreted. Cecropins have lytic and antibacterial activity against several Gram-positive and Gram-negative bacteria. The chain is Cecropin-2 (Cec2A) from Drosophila virilis (Fruit fly).